Reading from the N-terminus, the 216-residue chain is uncharacterized protein (216 aa).

In terms of domain architecture, Cupin type-2 spans Tyr125–Leu176.

This is an uncharacterized protein from Sinorhizobium fredii (strain NBRC 101917 / NGR234).